Reading from the N-terminus, the 789-residue chain is Probable 3-hydroxyacyl-CoA dehydrogenase (789 aa).

The protein belongs to the 3-hydroxyacyl-CoA dehydrogenase family.

It catalyses the reaction a (3S)-3-hydroxyacyl-CoA + NAD(+) = a 3-oxoacyl-CoA + NADH + H(+). Its pathway is lipid metabolism; fatty acid beta-oxidation. Functionally, involved in the degradation of long-chain fatty acids. This Bacillus subtilis (strain 168) protein is Probable 3-hydroxyacyl-CoA dehydrogenase (fadN).